We begin with the raw amino-acid sequence, 56 residues long: Ovomucoid (56 aa).

The 51-residue stretch at 6–56 (VDCSEYPKPDCTLEYRPLCGSDNKTYANKCNFCNAVVESNGTLTLSHFGKC) folds into the Kazal-like domain. Cystine bridges form between cysteine 8–cysteine 38, cysteine 16–cysteine 35, and cysteine 24–cysteine 56. An N-linked (GlcNAc...) asparagine glycan is attached at asparagine 45.

The protein resides in the secreted. The protein is Ovomucoid of Callipepla squamata castanogastris (Chestnut bellied scaled quail).